The following is a 453-amino-acid chain: Putative folate transporter 2 (453 aa).

The next 11 helical transmembrane spans lie at 41–64, 76–96, 108–126, 132–156, 176–195, 201–220, 241–260, 280–300, 312–330, 346–366, and 416–437; these read IVVYLVGLSDGLIHLASLAIYYLF, SLILMYPYLPFILKPIIALIT, PYLFLFSLFQSLNFLSLAL, IQATLVLFFISLCASFCTTVAEALV, IASKAVGSLSVAYFSGYFLE, YIFMATSIFPLIISISCLFL, FINTPVFIGPFLYIFVYMSG, SFMGTLRLTYGIASLIGIIVY, TLIFTTLVSFPIYISPIIL, VLSGGFLIEAITEIQLLPLFI, and LSMYILTCGLFLLLSLSLVPLL.

It belongs to the major facilitator superfamily. Folate-biopterin transporter (TC 2.A.71) family.

The protein localises to the plastid. It is found in the apicoplast. The protein resides in the membrane. Its function is as follows. Putative folate transporter. Required for sporogony of malaria parasites and host switching. This chain is Putative folate transporter 2, found in Plasmodium berghei (strain Anka).